Consider the following 181-residue polypeptide: Large ribosomal subunit protein uL10 (181 aa).

The protein belongs to the universal ribosomal protein uL10 family. Part of the ribosomal stalk of the 50S ribosomal subunit. The N-terminus interacts with L11 and the large rRNA to form the base of the stalk. The C-terminus forms an elongated spine to which L12 dimers bind in a sequential fashion forming a multimeric L10(L12)X complex.

Forms part of the ribosomal stalk, playing a central role in the interaction of the ribosome with GTP-bound translation factors. The sequence is that of Large ribosomal subunit protein uL10 from Fervidobacterium nodosum (strain ATCC 35602 / DSM 5306 / Rt17-B1).